A 433-amino-acid polypeptide reads, in one-letter code: Homeobox protein Hox-D3 (433 aa).

Disordered regions lie at residues 44-198, 258-280, and 401-433; these read STPH…SKRV, GILHSPAGQSPERSPPLGGAAGH, and HHGPCDPHPTYTDLSAHHSSQGRLPEAPKLTHL. A compositionally biased stretch (polar residues) spans 58 to 74; sequence SLDSDYPSSACSIQSSA. The span at 97-106 shows a compositional bias: gly residues; that stretch reads NSQGGGGGNQ. Residues 116 to 132 are compositionally biased toward pro residues; the sequence is PPQPPPPPPPTLPPSSP. The segment covering 146 to 159 has biased composition (low complexity); it reads GGLSASSSSSTISK. Positions 161-166 match the Antp-type hexapeptide motif; the sequence is IFPWMK. Positions 171 to 183 are enriched in polar residues; the sequence is NSKQKNSCATSGE. Positions 195–254 form a DNA-binding region, homeobox; sequence SKRVRTAYTSAQLVELEKEFHFNRYLCRPRRVEMANLLNLTERQIKIWFQNRRMKYKKDQ.

This sequence belongs to the Antp homeobox family. As to expression, detected in adult kidney, but not in other adult tissues tested.

The protein localises to the nucleus. Sequence-specific transcription factor which is part of a developmental regulatory system that provides cells with specific positional identities on the anterior-posterior axis. The sequence is that of Homeobox protein Hox-D3 (Hoxd3) from Mus musculus (Mouse).